The primary structure comprises 263 residues: Complement C1q tumor necrosis factor-related protein 6 (263 aa).

Positions 1–24 (MRVIMGTASLGSIWAVFLLPLVFG) are cleaved as a signal peptide. A glycan (N-linked (GlcNAc...) asparagine) is linked at Asn-76. A disordered region spans residues 80–123 (LKGDKGDRGPSGTPGKPGKNGTRGDRGSQGIKGDKGQAGSPGSS). Residues 82–123 (GDKGDRGPSGTPGKPGKNGTRGDRGSQGIKGDKGQAGSPGSS) enclose the Collagen-like domain. Residues 124–263 (CQTHYSAFSV…SGHLIKAEDN (140 aa)) form the C1q domain.

The protein localises to the secreted. The protein is Complement C1q tumor necrosis factor-related protein 6 (C1qtnf6) of Rattus norvegicus (Rat).